The following is a 94-amino-acid chain: CRISPR-associated endoribonuclease Cas2 1 (94 aa).

Residue D8 coordinates Mg(2+).

This sequence belongs to the CRISPR-associated endoribonuclease Cas2 protein family. As to quaternary structure, homodimer, forms a heterotetramer with a Cas1 homodimer. Requires Mg(2+) as cofactor.

In terms of biological role, CRISPR (clustered regularly interspaced short palindromic repeat), is an adaptive immune system that provides protection against mobile genetic elements (viruses, transposable elements and conjugative plasmids). CRISPR clusters contain sequences complementary to antecedent mobile elements and target invading nucleic acids. CRISPR clusters are transcribed and processed into CRISPR RNA (crRNA). Involved in the integration of spacer DNA into the CRISPR cassette. Functions as a ssRNA-specific endoribonuclease. The chain is CRISPR-associated endoribonuclease Cas2 1 (cas21) from Archaeoglobus fulgidus (strain ATCC 49558 / DSM 4304 / JCM 9628 / NBRC 100126 / VC-16).